A 389-amino-acid chain; its full sequence is Alanine racemase (389 aa).

Lysine 46 (proton acceptor; specific for D-alanine) is an active-site residue. At lysine 46 the chain carries N6-(pyridoxal phosphate)lysine. Arginine 144 contacts substrate. Residue tyrosine 275 is the Proton acceptor; specific for L-alanine of the active site. Substrate is bound at residue methionine 323.

The protein belongs to the alanine racemase family. The cofactor is pyridoxal 5'-phosphate.

The catalysed reaction is L-alanine = D-alanine. The protein operates within amino-acid biosynthesis; D-alanine biosynthesis; D-alanine from L-alanine: step 1/1. Functionally, catalyzes the interconversion of L-alanine and D-alanine. May also act on other amino acids. The chain is Alanine racemase (alr) from Mycolicibacterium smegmatis (strain ATCC 700084 / mc(2)155) (Mycobacterium smegmatis).